A 252-amino-acid polypeptide reads, in one-letter code: Probable endonuclease 4 (252 aa).

Residues histidine 56, histidine 96, glutamate 129, aspartate 162, histidine 165, histidine 191, aspartate 204, histidine 206, and glutamate 233 each coordinate Zn(2+).

The protein belongs to the AP endonuclease 2 family. Zn(2+) is required as a cofactor.

The catalysed reaction is Endonucleolytic cleavage to 5'-phosphooligonucleotide end-products.. In terms of biological role, endonuclease IV plays a role in DNA repair. It cleaves phosphodiester bonds at apurinic or apyrimidinic (AP) sites, generating a 3'-hydroxyl group and a 5'-terminal sugar phosphate. This Mycobacterium ulcerans (strain Agy99) protein is Probable endonuclease 4.